A 274-amino-acid chain; its full sequence is Ribosomal RNA small subunit methyltransferase A (274 aa).

Asn28, Leu30, Gly55, Glu77, Asp103, and Asn122 together coordinate S-adenosyl-L-methionine.

This sequence belongs to the class I-like SAM-binding methyltransferase superfamily. rRNA adenine N(6)-methyltransferase family. RsmA subfamily.

Its subcellular location is the cytoplasm. The enzyme catalyses adenosine(1518)/adenosine(1519) in 16S rRNA + 4 S-adenosyl-L-methionine = N(6)-dimethyladenosine(1518)/N(6)-dimethyladenosine(1519) in 16S rRNA + 4 S-adenosyl-L-homocysteine + 4 H(+). Specifically dimethylates two adjacent adenosines (A1518 and A1519) in the loop of a conserved hairpin near the 3'-end of 16S rRNA in the 30S particle. May play a critical role in biogenesis of 30S subunits. This Sinorhizobium medicae (strain WSM419) (Ensifer medicae) protein is Ribosomal RNA small subunit methyltransferase A.